Consider the following 257-residue polypeptide: E3 ubiquitin-protein ligase RNF170 (257 aa).

Residues 1 to 24 (MADNQEERPHFPLDEGSIIEGVSD) lie on the Lumenal side of the membrane. A helical transmembrane segment spans residues 25 to 45 (QVIVVVLLSFVAVGSLIYLLL). The Cytoplasmic portion of the chain corresponds to 46 to 200 (RNDEQNIHPE…GGLFWMFRIR (155 aa)). The RING-type zinc-finger motif lies at 87 to 130 (CPVCLQQATFPVETNCGHLFCGSCIIAYWRYGTWLGAINCPICR). The chain crosses the membrane as a helical span at residues 201-221 (IVLCLLGALLYLVSPLDIIPE). Residue A222 is a topological domain, lumenal. The chain crosses the membrane as a helical span at residues 223–243 (LFGILGFLDDLFVLFLLLIYI). The Cytoplasmic segment spans residues 244-257 (SIMYREVVTQRLYR).

It is found in the endoplasmic reticulum membrane. The catalysed reaction is S-ubiquitinyl-[E2 ubiquitin-conjugating enzyme]-L-cysteine + [acceptor protein]-L-lysine = [E2 ubiquitin-conjugating enzyme]-L-cysteine + N(6)-ubiquitinyl-[acceptor protein]-L-lysine.. It functions in the pathway protein modification; protein ubiquitination. Functionally, E3 ubiquitin-protein ligase that plays an essential role in stimulus-induced inositol 1,4,5-trisphosphate receptor (ITPR) ubiquitination and degradation via the endoplasmic reticulum-associated degradation (ERAD) pathway. Also involved in ITPR turnover in resting cells. The protein is E3 ubiquitin-protein ligase RNF170 (rnf170) of Xenopus laevis (African clawed frog).